Reading from the N-terminus, the 629-residue chain is tRNA uridine 5-carboxymethylaminomethyl modification enzyme MnmG (629 aa).

14–19 serves as a coordination point for FAD; it reads GAGHAG. 274 to 288 contacts NAD(+); the sequence is GPRYCPSIEDKVVRF.

Belongs to the MnmG family. Homodimer. Heterotetramer of two MnmE and two MnmG subunits. FAD serves as cofactor.

It is found in the cytoplasm. Its function is as follows. NAD-binding protein involved in the addition of a carboxymethylaminomethyl (cmnm) group at the wobble position (U34) of certain tRNAs, forming tRNA-cmnm(5)s(2)U34. The protein is tRNA uridine 5-carboxymethylaminomethyl modification enzyme MnmG of Xylella fastidiosa (strain 9a5c).